A 679-amino-acid polypeptide reads, in one-letter code: Glycine--tRNA ligase beta subunit (679 aa).

Belongs to the class-II aminoacyl-tRNA synthetase family. As to quaternary structure, tetramer of two alpha and two beta subunits.

Its subcellular location is the cytoplasm. It carries out the reaction tRNA(Gly) + glycine + ATP = glycyl-tRNA(Gly) + AMP + diphosphate. The protein is Glycine--tRNA ligase beta subunit of Streptococcus pyogenes serotype M3 (strain ATCC BAA-595 / MGAS315).